We begin with the raw amino-acid sequence, 318 residues long: Probable plastid-lipid-associated protein 1, chloroplastic (318 aa).

Residues 1 to 55 constitute a chloroplast transit peptide; that stretch reads MATVPLFTQFPCKTLNPSSSNTKHQSKSPILLPINSINRRSEIGVSVHRPDFKIR. Position 57 is a phosphothreonine (threonine 57).

It belongs to the PAP/fibrillin family. Interacts (via N-terminus) with ABI2. As to expression, expressed in flower buds. Detected in tapetal cells, endothecium and connective in anthers and in subepidermal cells in filaments.

It localises to the plastid. Its subcellular location is the chloroplast. It is found in the plastoglobule. The protein localises to the chloroplast thylakoid. Functionally, probably involved in light/cold stress-related jasmonate (JA) biosynthesis. Contributes to the protection of photosystem II (PSII) against light stress. This chain is Probable plastid-lipid-associated protein 1, chloroplastic (PAP1), found in Arabidopsis thaliana (Mouse-ear cress).